Here is a 494-residue protein sequence, read N- to C-terminus: Amidophosphoribosyltransferase (494 aa).

Positions 1-10 (MFNYSGLNEE) are excised as a propeptide. The active-site Nucleophile is the C11. Residues 11-231 (CGVFGIWNHP…AGEYVVINDK (221 aa)) form the Glutamine amidotransferase type-2 domain. Residues S294, D356, and D357 each coordinate Mg(2+).

The protein in the C-terminal section; belongs to the purine/pyrimidine phosphoribosyltransferase family. Mg(2+) is required as a cofactor.

It carries out the reaction 5-phospho-beta-D-ribosylamine + L-glutamate + diphosphate = 5-phospho-alpha-D-ribose 1-diphosphate + L-glutamine + H2O. It functions in the pathway purine metabolism; IMP biosynthesis via de novo pathway; N(1)-(5-phospho-D-ribosyl)glycinamide from 5-phospho-alpha-D-ribose 1-diphosphate: step 1/2. Its function is as follows. Catalyzes the formation of phosphoribosylamine from phosphoribosylpyrophosphate (PRPP) and glutamine. The sequence is that of Amidophosphoribosyltransferase from Staphylococcus aureus (strain Mu50 / ATCC 700699).